Here is a 460-residue protein sequence, read N- to C-terminus: Chromosomal replication initiator protein DnaA (460 aa).

Positions 1–91 are domain I, interacts with DnaA modulators; the sequence is MSLINPKVSA…LLWQNEDKSI (91 aa). The tract at residues 91 to 122 is domain II; it reads ICSIDIQVTEEKNSSSSIISKNKEESVNNLGS. Residues 123-342 form a domain III, AAA+ region region; the sequence is PLDPRFTFDN…GALNKVAHTS (220 aa). 4 residues coordinate ATP: Gly-169, Gly-171, Lys-172, and Thr-173. Residues 343 to 460 form a domain IV, binds dsDNA region; it reads LIGRSMTVES…EINQLRKMFK (118 aa).

This sequence belongs to the DnaA family. In terms of assembly, oligomerizes as a right-handed, spiral filament on DNA at oriC.

Its subcellular location is the cytoplasm. Its function is as follows. Plays an essential role in the initiation and regulation of chromosomal replication. ATP-DnaA binds to the origin of replication (oriC) to initiate formation of the DNA replication initiation complex once per cell cycle. Binds the DnaA box (a 9 base pair repeat at the origin) and separates the double-stranded (ds)DNA. Forms a right-handed helical filament on oriC DNA; dsDNA binds to the exterior of the filament while single-stranded (ss)DNA is stabiized in the filament's interior. The ATP-DnaA-oriC complex binds and stabilizes one strand of the AT-rich DNA unwinding element (DUE), permitting loading of DNA polymerase. After initiation quickly degrades to an ADP-DnaA complex that is not apt for DNA replication. Binds acidic phospholipids. The chain is Chromosomal replication initiator protein DnaA from Wolbachia sp. subsp. Brugia malayi (strain TRS).